Here is a 179-residue protein sequence, read N- to C-terminus: MARLQEFYKETVAPDLLKQFGYKSVMEVPRITKITLNMGVGEAVGDKKILEHAVGDMVKIAGQKPVVTKARKSIAGFKIRDGYPIGCMVTLRGAKMFEFLDRLVTVAMPRIRDFRGIGGKGFDGRGNYNLGVKEQIIFPEIEYDKIDALRGMNISITTTAKSDQEARALLVAFKFPFKN.

It belongs to the universal ribosomal protein uL5 family. Part of the 50S ribosomal subunit; part of the 5S rRNA/L5/L18/L25 subcomplex. Contacts the 5S rRNA and the P site tRNA. Forms a bridge to the 30S subunit in the 70S ribosome.

Its function is as follows. This is one of the proteins that bind and probably mediate the attachment of the 5S RNA into the large ribosomal subunit, where it forms part of the central protuberance. In the 70S ribosome it contacts protein S13 of the 30S subunit (bridge B1b), connecting the 2 subunits; this bridge is implicated in subunit movement. Contacts the P site tRNA; the 5S rRNA and some of its associated proteins might help stabilize positioning of ribosome-bound tRNAs. This Aromatoleum aromaticum (strain DSM 19018 / LMG 30748 / EbN1) (Azoarcus sp. (strain EbN1)) protein is Large ribosomal subunit protein uL5.